The chain runs to 592 residues: Arginine--tRNA ligase (592 aa).

The short motif at 112-122 is the 'HIGH' region element; sequence VNPNKELHVGH.

This sequence belongs to the class-I aminoacyl-tRNA synthetase family. Monomer.

It localises to the cytoplasm. The catalysed reaction is tRNA(Arg) + L-arginine + ATP = L-arginyl-tRNA(Arg) + AMP + diphosphate. This chain is Arginine--tRNA ligase, found in Thermus thermophilus (strain ATCC 27634 / DSM 579 / HB8).